The chain runs to 176 residues: Large ribosomal subunit protein uL6 (176 aa).

This sequence belongs to the universal ribosomal protein uL6 family. In terms of assembly, part of the 50S ribosomal subunit.

Its function is as follows. This protein binds to the 23S rRNA, and is important in its secondary structure. It is located near the subunit interface in the base of the L7/L12 stalk, and near the tRNA binding site of the peptidyltransferase center. The chain is Large ribosomal subunit protein uL6 from Lacticaseibacillus paracasei (strain ATCC 334 / BCRC 17002 / CCUG 31169 / CIP 107868 / KCTC 3260 / NRRL B-441) (Lactobacillus paracasei).